We begin with the raw amino-acid sequence, 743 residues long: Alpha-N-acetylglucosaminidase (743 aa).

The first 23 residues, 1–23 (MEAVAVAAAVGVLLLAGAGGAAG), serve as a signal peptide directing secretion. N-linked (GlcNAc...) asparagine glycosylation is found at Asn-261, Asn-272, Asn-435, Asn-503, Asn-526, and Asn-532.

Belongs to the glycosyl hydrolase 89 family. As to quaternary structure, monomer and homodimer. As to expression, liver, ovary, peripheral blood leukocytes, testis, prostate, spleen, colon, lung, placenta and kidney.

It localises to the lysosome. It carries out the reaction Hydrolysis of terminal non-reducing N-acetyl-D-glucosamine residues in N-acetyl-alpha-D-glucosaminides.. Involved in the degradation of heparan sulfate. This chain is Alpha-N-acetylglucosaminidase (NAGLU), found in Homo sapiens (Human).